We begin with the raw amino-acid sequence, 274 residues long: NH(3)-dependent NAD(+) synthetase (274 aa).

ATP is bound at residue 46-53 (GISGGQDS). Position 52 (aspartate 52) interacts with Mg(2+). Arginine 140 contacts deamido-NAD(+). Threonine 160 serves as a coordination point for ATP. Glutamate 165 contributes to the Mg(2+) binding site. Residues lysine 173 and aspartate 180 each contribute to the deamido-NAD(+) site. ATP is bound by residues lysine 189 and threonine 211. 260–261 (HK) contacts deamido-NAD(+).

Belongs to the NAD synthetase family. As to quaternary structure, homodimer.

It catalyses the reaction deamido-NAD(+) + NH4(+) + ATP = AMP + diphosphate + NAD(+) + H(+). It participates in cofactor biosynthesis; NAD(+) biosynthesis; NAD(+) from deamido-NAD(+) (ammonia route): step 1/1. Functionally, catalyzes the ATP-dependent amidation of deamido-NAD to form NAD. Uses ammonia as a nitrogen source. The chain is NH(3)-dependent NAD(+) synthetase from Streptococcus gordonii (strain Challis / ATCC 35105 / BCRC 15272 / CH1 / DL1 / V288).